The following is a 548-amino-acid chain: Zinc metalloproteinase (548 aa).

The N-terminal stretch at 1-28 (MKKYYAVTGIALAVGMLCTTQLAGATQA) is a signal peptide. His-362 lines the Zn(2+) pocket. Glu-363 is an active-site residue. 2 residues coordinate Zn(2+): His-366 and Glu-386. Positions 440–459 (SNWKPTATNPNDNNDQGGVH) are disordered. Polar residues predominate over residues 442–459 (WKPTATNPNDNNDQGGVH). His-459 functions as the Proton donor in the catalytic mechanism.

It belongs to the peptidase M4 family. The cofactor is Ca(2+). Requires Zn(2+) as cofactor.

It is found in the secreted. The protein localises to the cell wall. Its function is as follows. Zinc metalloprotease with hemolytic properties. The polypeptide is Zinc metalloproteinase (hly) (Renibacterium salmoninarum).